Consider the following 93-residue polypeptide: Acylphosphatase (93 aa).

The 89-residue stretch at 5-93 folds into the Acylphosphatase-like domain; the sequence is AKQIVVRGRV…PNFRGFQVTG (89 aa). Catalysis depends on residues Arg20 and Asn38.

This sequence belongs to the acylphosphatase family.

It catalyses the reaction an acyl phosphate + H2O = a carboxylate + phosphate + H(+). The polypeptide is Acylphosphatase (acyP) (Lacticaseibacillus paracasei (strain ATCC 334 / BCRC 17002 / CCUG 31169 / CIP 107868 / KCTC 3260 / NRRL B-441) (Lactobacillus paracasei)).